The chain runs to 82 residues: Small ribosomal subunit protein bS16 (82 aa).

This sequence belongs to the bacterial ribosomal protein bS16 family.

In Enterobacter sp. (strain 638), this protein is Small ribosomal subunit protein bS16.